The chain runs to 265 residues: UPF0246 protein NT01EI_0662 (265 aa).

The protein belongs to the UPF0246 family.

In Edwardsiella ictaluri (strain 93-146), this protein is UPF0246 protein NT01EI_0662.